The sequence spans 156 residues: Ribosomal RNA large subunit methyltransferase H (156 aa).

Residues Leu-73, Gly-104, and 123–128 contribute to the S-adenosyl-L-methionine site; that span reads LSKLTL.

This sequence belongs to the RNA methyltransferase RlmH family. Homodimer.

Its subcellular location is the cytoplasm. The enzyme catalyses pseudouridine(1915) in 23S rRNA + S-adenosyl-L-methionine = N(3)-methylpseudouridine(1915) in 23S rRNA + S-adenosyl-L-homocysteine + H(+). Functionally, specifically methylates the pseudouridine at position 1915 (m3Psi1915) in 23S rRNA. This is Ribosomal RNA large subunit methyltransferase H from Idiomarina loihiensis (strain ATCC BAA-735 / DSM 15497 / L2-TR).